The primary structure comprises 263 residues: MPNNDYLTIYGEQIKSRLLIGSALYPSPAVMNESIVASGAEIVTVSLRRQQSAAAGDDFWQLIKNTGLKILPNTAGCHSVKEAITLAKMCREVFATDWIKLELIGDDYNLQPDPFALLEATKILIDDGFKVLPYCTDDLVLCQRLNALGCEVLMPWGAPIGTGKGLLNSYNLKTIRERLPEATLIVDAGLGLPSHACQALELGYDAVLLNSAIAGAGCPITMSRAFKAAVEAGRFAYNAKAMPEKDVAAPSTPTMGMPFWHQE.

The Schiff-base intermediate with DXP role is filled by Lys100. 1-deoxy-D-xylulose 5-phosphate-binding positions include Gly161, 188–189 (AG), and 210–211 (NS).

Belongs to the ThiG family. Homotetramer. Forms heterodimers with either ThiH or ThiS.

The protein localises to the cytoplasm. It carries out the reaction [ThiS sulfur-carrier protein]-C-terminal-Gly-aminoethanethioate + 2-iminoacetate + 1-deoxy-D-xylulose 5-phosphate = [ThiS sulfur-carrier protein]-C-terminal Gly-Gly + 2-[(2R,5Z)-2-carboxy-4-methylthiazol-5(2H)-ylidene]ethyl phosphate + 2 H2O + H(+). Its pathway is cofactor biosynthesis; thiamine diphosphate biosynthesis. Catalyzes the rearrangement of 1-deoxy-D-xylulose 5-phosphate (DXP) to produce the thiazole phosphate moiety of thiamine. Sulfur is provided by the thiocarboxylate moiety of the carrier protein ThiS. In vitro, sulfur can be provided by H(2)S. The chain is Thiazole synthase from Pseudoalteromonas translucida (strain TAC 125).